We begin with the raw amino-acid sequence, 506 residues long: ATP synthase subunit alpha (506 aa).

Position 172–179 (172–179 (GDRKTGKT)) interacts with ATP.

It belongs to the ATPase alpha/beta chains family. In terms of assembly, F-type ATPases have 2 components, CF(1) - the catalytic core - and CF(0) - the membrane proton channel. CF(1) has five subunits: alpha(3), beta(3), gamma(1), delta(1), epsilon(1). CF(0) has three main subunits: a(1), b(2) and c(9-12). The alpha and beta chains form an alternating ring which encloses part of the gamma chain. CF(1) is attached to CF(0) by a central stalk formed by the gamma and epsilon chains, while a peripheral stalk is formed by the delta and b chains.

It is found in the cell membrane. The enzyme catalyses ATP + H2O + 4 H(+)(in) = ADP + phosphate + 5 H(+)(out). In terms of biological role, produces ATP from ADP in the presence of a proton gradient across the membrane. The alpha chain is a regulatory subunit. This chain is ATP synthase subunit alpha, found in Lactobacillus gasseri (strain ATCC 33323 / DSM 20243 / BCRC 14619 / CIP 102991 / JCM 1131 / KCTC 3163 / NCIMB 11718 / NCTC 13722 / AM63).